We begin with the raw amino-acid sequence, 329 residues long: Glycerol-3-phosphate dehydrogenase [NAD(P)+] (329 aa).

3 residues coordinate NADPH: Trp15, His35, and Lys107. Lys107, Gly135, and Ser137 together coordinate sn-glycerol 3-phosphate. Ala139 is a binding site for NADPH. Sn-glycerol 3-phosphate contacts are provided by Lys190, Asp243, Ser253, Arg254, and Asn255. Lys190 serves as the catalytic Proton acceptor. Arg254 contacts NADPH. NADPH is bound by residues Leu276 and Glu278.

The protein belongs to the NAD-dependent glycerol-3-phosphate dehydrogenase family.

It is found in the cytoplasm. The enzyme catalyses sn-glycerol 3-phosphate + NAD(+) = dihydroxyacetone phosphate + NADH + H(+). The catalysed reaction is sn-glycerol 3-phosphate + NADP(+) = dihydroxyacetone phosphate + NADPH + H(+). It functions in the pathway membrane lipid metabolism; glycerophospholipid metabolism. In terms of biological role, catalyzes the reduction of the glycolytic intermediate dihydroxyacetone phosphate (DHAP) to sn-glycerol 3-phosphate (G3P), the key precursor for phospholipid synthesis. The protein is Glycerol-3-phosphate dehydrogenase [NAD(P)+] of Rhodopseudomonas palustris (strain BisB5).